Here is an 860-residue protein sequence, read N- to C-terminus: Leucine--tRNA ligase (860 aa).

Positions 42-52 match the 'HIGH' region motif; the sequence is PYPSGRLHMGH. The 'KMSKS' region signature appears at 619-623; that stretch reads KMSKS. Residue lysine 622 coordinates ATP.

This sequence belongs to the class-I aminoacyl-tRNA synthetase family.

Its subcellular location is the cytoplasm. It catalyses the reaction tRNA(Leu) + L-leucine + ATP = L-leucyl-tRNA(Leu) + AMP + diphosphate. This Yersinia pestis bv. Antiqua (strain Angola) protein is Leucine--tRNA ligase.